The sequence spans 629 residues: tRNA uridine 5-carboxymethylaminomethyl modification enzyme MnmG (629 aa).

FAD-binding positions include 14-19, V126, and S181; that span reads GAGHAG. Residue 273 to 287 participates in NAD(+) binding; sequence GPRYCPSIEDKVVRF. Q370 serves as a coordination point for FAD.

Belongs to the MnmG family. Homodimer. Heterotetramer of two MnmE and two MnmG subunits. It depends on FAD as a cofactor.

It localises to the cytoplasm. In terms of biological role, NAD-binding protein involved in the addition of a carboxymethylaminomethyl (cmnm) group at the wobble position (U34) of certain tRNAs, forming tRNA-cmnm(5)s(2)U34. The protein is tRNA uridine 5-carboxymethylaminomethyl modification enzyme MnmG of Geobacillus thermodenitrificans (strain NG80-2).